Consider the following 512-residue polypeptide: HMG box-containing protein 1 (512 aa).

The tract at residues 151–180 is disordered; sequence RPPPVASSKGEPAFPHHWKEQTPVRHERAN. Residues 167–180 are compositionally biased toward basic and acidic residues; sequence HWKEQTPVRHERAN. In terms of domain architecture, AXH spans 201 to 343; the sequence is WCNSWPSTAW…PPGHPDAINF (143 aa). The segment at residues 432 to 500 is a DNA-binding region (HMG box); that stretch reads CKRPMNAFML…EQKRLNPDCW (69 aa).

As to quaternary structure, binds TCF4. Binds RB1. Binds the second PAH repeat of SIN3A. In terms of processing, ubiquitinated by the CTLH E3 ubiquitin-protein ligase complex, leading to subsequent proteasomal degradation.

The protein localises to the nucleus. Functionally, transcriptional repressor that binds to the promoter region of target genes. Plays a role in the regulation of the cell cycle and of the Wnt pathway. Binds preferentially to the sequence 5'-TTCATTCATTCA-3'. Binding to the histone H1.0 promoter is enhanced by interaction with RB1. Disrupts the interaction between DNA and TCF4. The polypeptide is HMG box-containing protein 1 (HBP1) (Bos taurus (Bovine)).